The sequence spans 631 residues: Phosphomethylpyrimidine synthase (631 aa).

Residues Asn-231, Met-260, Tyr-289, His-325, 345–347 (SRG), 386–389 (DGLR), and Glu-425 contribute to the substrate site. His-429 contributes to the Zn(2+) binding site. Tyr-452 is a substrate binding site. His-493 lines the Zn(2+) pocket. Cys-573, Cys-576, and Cys-581 together coordinate [4Fe-4S] cluster.

The protein belongs to the ThiC family. As to quaternary structure, homodimer. The cofactor is [4Fe-4S] cluster.

It catalyses the reaction 5-amino-1-(5-phospho-beta-D-ribosyl)imidazole + S-adenosyl-L-methionine = 4-amino-2-methyl-5-(phosphooxymethyl)pyrimidine + CO + 5'-deoxyadenosine + formate + L-methionine + 3 H(+). Its pathway is cofactor biosynthesis; thiamine diphosphate biosynthesis. In terms of biological role, catalyzes the synthesis of the hydroxymethylpyrimidine phosphate (HMP-P) moiety of thiamine from aminoimidazole ribotide (AIR) in a radical S-adenosyl-L-methionine (SAM)-dependent reaction. This chain is Phosphomethylpyrimidine synthase, found in Acinetobacter baylyi (strain ATCC 33305 / BD413 / ADP1).